The following is a 64-amino-acid chain: Small ribosomal subunit protein bS21 (64 aa).

This sequence belongs to the bacterial ribosomal protein bS21 family.

The sequence is that of Small ribosomal subunit protein bS21 from Neorickettsia sennetsu (strain ATCC VR-367 / Miyayama) (Ehrlichia sennetsu).